The chain runs to 447 residues: NADH-ubiquinone oxidoreductase chain 4 (447 aa).

A run of 13 helical transmembrane segments spans residues 28–48 (IFLLTFMFMINLSSLNYFNYI), 56–76 (MVSYGLILLSFWICGLMLMAS), 89–109 (FVFMILFLLFMLVLTFSSMSV), 110–130 (FMFYLFFEASLIPTLFLILGW), 141–161 (VYLLFYTLLASLPLLIGIFYI), 183–203 (LLYLSLVFAFLVKMPMFLVHL), 213–233 (PVSGSMILAGILLKLGGYGLL), 246–266 (YNYWWISISLVGGVLISLVCL), 273–293 (ALIAYSSVAHMGIVLSGLLTM), 298–318 (LTGSYALMIAHGLCSSGLFCL), 331–351 (LLINKGLLNFMPTLSLWWFLL), 374–394 (IVSWSWITMIMLSFLSFFSAA), and 409–431 (YSGVYFFSVGTTREFLLLMLHWL).

This sequence belongs to the complex I subunit 4 family.

Its subcellular location is the mitochondrion membrane. The catalysed reaction is a ubiquinone + NADH + 5 H(+)(in) = a ubiquinol + NAD(+) + 4 H(+)(out). In terms of biological role, core subunit of the mitochondrial membrane respiratory chain NADH dehydrogenase (Complex I) that is believed to belong to the minimal assembly required for catalysis. Complex I functions in the transfer of electrons from NADH to the respiratory chain. The immediate electron acceptor for the enzyme is believed to be ubiquinone. This Anopheles gambiae (African malaria mosquito) protein is NADH-ubiquinone oxidoreductase chain 4 (mt:ND4).